Reading from the N-terminus, the 176-residue chain is UPF0262 protein GbCGDNIH1_1393 (176 aa).

It belongs to the UPF0262 family.

The polypeptide is UPF0262 protein GbCGDNIH1_1393 (Granulibacter bethesdensis (strain ATCC BAA-1260 / CGDNIH1)).